A 280-amino-acid chain; its full sequence is tRNA pseudouridine synthase A (280 aa).

D55 serves as the catalytic Nucleophile. Y110 provides a ligand contact to substrate.

The protein belongs to the tRNA pseudouridine synthase TruA family.

The enzyme catalyses uridine(38/39/40) in tRNA = pseudouridine(38/39/40) in tRNA. Functionally, formation of pseudouridine at positions 38, 39 and 40 in the anticodon stem and loop of transfer RNAs. The protein is tRNA pseudouridine synthase A of Methanosphaerula palustris (strain ATCC BAA-1556 / DSM 19958 / E1-9c).